Consider the following 445-residue polypeptide: Exodeoxyribonuclease 7 large subunit (445 aa).

Belongs to the XseA family. As to quaternary structure, heterooligomer composed of large and small subunits.

The protein localises to the cytoplasm. The enzyme catalyses Exonucleolytic cleavage in either 5'- to 3'- or 3'- to 5'-direction to yield nucleoside 5'-phosphates.. In terms of biological role, bidirectionally degrades single-stranded DNA into large acid-insoluble oligonucleotides, which are then degraded further into small acid-soluble oligonucleotides. This Xanthomonas oryzae pv. oryzae (strain PXO99A) protein is Exodeoxyribonuclease 7 large subunit.